We begin with the raw amino-acid sequence, 475 residues long: MVEDLAASYIVLKLENEIRQAQVQWLMEENAALQAQIPELQKSQAAKEYDLLRKSSEAKEPQKLPEHMNPPAAWEAQKTPEFKEPQKPPEPQDLLPWEPPAAWELQEAPAAPESLAPPATRESQKPPMAHEIPTVLEGQGPANTQDATIAQEPKNSEPQDPPNIEKPQEAPEYQETAAQLEFLELPPPQEPLEPSNAQEFLELSAAQESLEGLIVVETSAASEFPQAPIGLEATDFPLQYTLTFSGDSQKLPEFLVQLYSYMRVRGHLYPTEAALVSFVGNCFSGRAGWWFQLLLDIQSPLLEQCESFIPVLQDTFDNPENMKDANQCIHQLCQGEGHVATHFHLIAQELNWDESTLWIQFQEGLASSIQDELSHTSPATNLSDLITQCISLEEKPDPNPLGKSSSAEGDGPESPPAENQPMQAAINCPHISEAEWVRWHKGRLCLYCGYPGHFARDCPVKPHQALQAGNIQACQ.

2 stretches are compositionally biased toward basic and acidic residues: residues 51–66 and 78–87; these read LLRKSSEAKEPQKLPE and KTPEFKEPQK. Disordered stretches follow at residues 51-101, 152-173, and 397-421; these read LLRK…EPPA, EPKNSEPQDPPNIEKPQEAPEY, and DPNPLGKSSSAEGDGPESPPAENQP. The CCHC-type zinc finger occupies 443–462; the sequence is RLCLYCGYPGHFARDCPVKP.

It localises to the nucleus. Functionally, may function as a transcriptional regulator. Plays a role in postnatal myogenesis, may be involved in the regulation of satellite cells self-renewal. This Homo sapiens (Human) protein is Retrotransposon Gag-like protein 3.